The primary structure comprises 77 residues: Small ribosomal subunit protein uS17 (77 aa).

This sequence belongs to the universal ribosomal protein uS17 family. Part of the 30S ribosomal subunit.

Its function is as follows. One of the primary rRNA binding proteins, it binds specifically to the 5'-end of 16S ribosomal RNA. The protein is Small ribosomal subunit protein uS17 of Rickettsia prowazekii (strain Madrid E).